We begin with the raw amino-acid sequence, 133 residues long: Basic leucine zipper transcriptional factor ATF-like 3 (133 aa).

A disordered region spans residues 1 to 68 (MSQGPPAGGV…EHESLEQENS (68 aa)). Residues S2 and S24 each carry the phosphoserine modification. Polar residues predominate over residues 11–24 (LQSSVAAPGNQPQS). Positions 28–91 (DDRKVRRREK…RHLTEALKEH (64 aa)) constitute a bZIP domain. A basic motif region spans residues 30 to 55 (RKVRRREKNRVAAQRSRKKQTQKSDK). The segment covering 51-68 (QKSDKLHEEHESLEQENS) has biased composition (basic and acidic residues). The tract at residues 56 to 84 (LHEEHESLEQENSVLRREIAKLKEELRHL) is leucine-zipper.

It belongs to the bZIP family. As to quaternary structure, heterodimer; heterodimerizes with JUN family proteins. Interacts with JUN. Ubiquitously expressed.

The protein localises to the nucleus. In terms of biological role, AP-1 family transcription factor that controls the differentiation of CD8(+) thymic conventional dendritic cells in the immune system. Acts via the formation of a heterodimer with JUN family proteins that recognizes and binds DNA sequence 5'-TGA[CG]TCA-3' and regulates expression of target genes. Required for development of CD8-alpha(+) classical dendritic cells (cDCs) and related CD103(+) dendritic cells that cross-present antigens to CD8 T-cells and produce interleukin-12 (IL12) in response to pathogens. The chain is Basic leucine zipper transcriptional factor ATF-like 3 (Batf3) from Rattus norvegicus (Rat).